The following is a 224-amino-acid chain: 3-dehydroquinate dehydratase (224 aa).

3-dehydroquinate is bound by residues 30–32 (EWR) and Arg-62. His-118 (proton donor/acceptor) is an active-site residue. Residue Lys-143 is the Schiff-base intermediate with substrate of the active site. 3-dehydroquinate is bound by residues Arg-186, Ser-205, and Gln-209.

The protein belongs to the type-I 3-dehydroquinase family. Homodimer.

It carries out the reaction 3-dehydroquinate = 3-dehydroshikimate + H2O. Its pathway is metabolic intermediate biosynthesis; chorismate biosynthesis; chorismate from D-erythrose 4-phosphate and phosphoenolpyruvate: step 3/7. In terms of biological role, involved in the third step of the chorismate pathway, which leads to the biosynthesis of aromatic amino acids. Catalyzes the cis-dehydration of 3-dehydroquinate (DHQ) and introduces the first double bond of the aromatic ring to yield 3-dehydroshikimate. The sequence is that of 3-dehydroquinate dehydratase from Streptococcus suis (strain 98HAH33).